The primary structure comprises 279 residues: Shikimate dehydrogenase (NADP(+)) (279 aa).

Residues 14-16 and threonine 63 each bind shikimate; that span reads SIS. Lysine 67 acts as the Proton acceptor in catalysis. Glutamate 79 lines the NADP(+) pocket. Residues asparagine 88 and aspartate 103 each contribute to the shikimate site. Residues 127–131, 151–156, and methionine 219 each bind NADP(+); these read GAGGA and NRTYEK. Residue tyrosine 221 coordinates shikimate. Position 242 (glycine 242) interacts with NADP(+).

It belongs to the shikimate dehydrogenase family. In terms of assembly, homodimer.

The enzyme catalyses shikimate + NADP(+) = 3-dehydroshikimate + NADPH + H(+). The protein operates within metabolic intermediate biosynthesis; chorismate biosynthesis; chorismate from D-erythrose 4-phosphate and phosphoenolpyruvate: step 4/7. Involved in the biosynthesis of the chorismate, which leads to the biosynthesis of aromatic amino acids. Catalyzes the reversible NADPH linked reduction of 3-dehydroshikimate (DHSA) to yield shikimate (SA). This chain is Shikimate dehydrogenase (NADP(+)), found in Caldicellulosiruptor saccharolyticus (strain ATCC 43494 / DSM 8903 / Tp8T 6331).